Reading from the N-terminus, the 589-residue chain is Mediator of RNA polymerase II transcription subunit 26 (589 aa).

The 78-residue stretch at 10-87 folds into the TFIIS N-terminal domain; it reads QMRDRLLQAI…RNWQKLIEPG (78 aa). 3 disordered regions span residues 83–233, 247–320, and 363–441; these read LIEP…TKLP, ARVD…DGPS, and LETK…PIPE. Residues 190–213 show a composition bias toward basic and acidic residues; sequence LLEKDDEVPSDRIRLEHLDNDRHN. Low complexity predominate over residues 259–268; the sequence is SPRYSSSPRS. Residues 276-297 show a composition bias toward polar residues; it reads KRSTTYAPKGTLSSPSLNSAQV. 2 stretches are compositionally biased toward basic and acidic residues: residues 398–412 and 424–435; these read SEDR…RRLT and TPKESHQEEECH.

This sequence belongs to the Mediator complex subunit 26 family. In terms of assembly, component of the Mediator complex.

Its subcellular location is the nucleus. Functionally, component of the Mediator complex, a coactivator involved in the regulated transcription of nearly all RNA polymerase II-dependent genes. Mediator functions as a bridge to convey information from gene-specific regulatory proteins to the basal RNA polymerase II transcription machinery. Mediator is recruited to promoters by direct interactions with regulatory proteins and serves as a scaffold for the assembly of a functional preinitiation complex with RNA polymerase II and the general transcription factors. The polypeptide is Mediator of RNA polymerase II transcription subunit 26 (med26) (Danio rerio (Zebrafish)).